Consider the following 240-residue polypeptide: PF03932 family protein CutC (240 aa).

The protein belongs to the CutC family.

It is found in the cytoplasm. This chain is PF03932 family protein CutC, found in Xanthomonas axonopodis pv. citri (strain 306).